Here is a 752-residue protein sequence, read N- to C-terminus: MAP/microtubule affinity-regulating kinase 4 (752 aa).

The tract at residues 1-36 (MSSRTVLAPGNDRNSDTHGTLGSGRSSDKGPSWSSR) is disordered. Residues 59–310 (YRLLRTIGKG…LEQIMKDKWI (252 aa)) enclose the Protein kinase domain. Residues 65–73 (IGKGNFAKV) and Lys88 contribute to the ATP site. Asp181 (proton acceptor) is an active-site residue. Thr214 carries the phosphothreonine; by LKB1 modification. One can recognise a UBA domain in the interval 324 to 368 (EPEEDFGDTKRIEVMVGMGYTREEIKESLTSQKYNEVTATYLLLG). Residues 385–614 (ARVRAPSDTT…PAGRPRPTTN (230 aa)) form a disordered region. A compositionally biased stretch (low complexity) spans 391 to 406 (SDTTNGTSSSKGTSHS). A phosphoserine mark is found at Ser423 and Ser543. Residues 544–553 (PSSHSLAPPS) are compositionally biased toward low complexity. Residues 703–752 (AGGPEPLSHFEVEVCQLPRPGLRGVLFRRVAGTALAFRTLVTRISNDLEL) enclose the KA1 domain.

The protein belongs to the protein kinase superfamily. CAMK Ser/Thr protein kinase family. SNF1 subfamily. In terms of assembly, interacts with MAPT/TAU. Interacts with gamma-tubulin. Interacts with ODF2. Interacts with USP9X. Interacts with YWHAQ. Interacts with NLRP3; promoting NLRP3 recruitment to microtubule organizing center (MTOC). The cofactor is Mg(2+). Ubiquitinated with 'Lys-29'- and 'Lys-33'-linked polyubiquitins which appear to impede LKB1-mediated phosphorylation. Deubiquitinated by USP9X. In terms of processing, phosphorylated at Thr-214 by STK11/LKB1 in complex with STE20-related adapter-alpha (STRADA) pseudo kinase and CAB39. Phosphorylated throughout the cell cycle. Ubiquitous. Isoform 2 is brain-specific. Expressed at highest levels in brain and testis. Also expressed in heart, lung, liver, muscle, kidney and spleen.

The protein localises to the cytoplasm. It localises to the cytoskeleton. The protein resides in the microtubule organizing center. Its subcellular location is the centrosome. It is found in the cilium basal body. The protein localises to the cilium axoneme. It localises to the cell projection. The protein resides in the dendrite. The enzyme catalyses L-seryl-[protein] + ATP = O-phospho-L-seryl-[protein] + ADP + H(+). The catalysed reaction is L-threonyl-[protein] + ATP = O-phospho-L-threonyl-[protein] + ADP + H(+). Its activity is regulated as follows. Activated by phosphorylation on Thr-214. Serine/threonine-protein kinase. Phosphorylates the microtubule-associated protein MAPT/TAU. Also phosphorylates the microtubule-associated proteins MAP2 and MAP4. Involved in regulation of the microtubule network, causing reorganization of microtubules into bundles. Required for the initiation of axoneme extension during cilium assembly. Regulates the centrosomal location of ODF2 and phosphorylates ODF2 in vitro. Plays a role in cell cycle progression, specifically in the G1/S checkpoint. Reduces neuronal cell survival. Plays a role in energy homeostasis by regulating satiety and metabolic rate. Promotes adipogenesis by activating JNK1 and inhibiting the p38MAPK pathway, and triggers apoptosis by activating the JNK1 pathway. Phosphorylates mTORC1 complex member RPTOR and acts as a negative regulator of the mTORC1 complex, probably due to disruption of the interaction between phosphorylated RPTOR and the RRAGA/RRAGC heterodimer which is required for mTORC1 activation. Involved in NLRP3 positioning along microtubules by mediating NLRP3 recruitment to microtubule organizing center (MTOC) upon inflammasome activation. The chain is MAP/microtubule affinity-regulating kinase 4 from Homo sapiens (Human).